Reading from the N-terminus, the 391-residue chain is Phosphoglycerate kinase (391 aa).

Substrate is bound by residues 23–25 (DFN), Arg38, 61–64 (HLGK), Arg117, and Arg150. ATP contacts are provided by residues Lys201, Gly291, Glu322, and 348–351 (GGDS).

Belongs to the phosphoglycerate kinase family. Monomer.

The protein localises to the cytoplasm. It catalyses the reaction (2R)-3-phosphoglycerate + ATP = (2R)-3-phospho-glyceroyl phosphate + ADP. Its pathway is carbohydrate degradation; glycolysis; pyruvate from D-glyceraldehyde 3-phosphate: step 2/5. The protein is Phosphoglycerate kinase of Clostridium beijerinckii (strain ATCC 51743 / NCIMB 8052) (Clostridium acetobutylicum).